The sequence spans 304 residues: Protoheme IX farnesyltransferase (304 aa).

Transmembrane regions (helical) follow at residues 24-44 (VMTL…GTIH), 45-65 (PVIA…AAAL), 107-127 (VFVM…FSIF), 145-165 (IVIG…AVTG), 172-192 (VLLF…LALF), 234-254 (WIGG…LVFV), and 277-297 (LFGY…GDRL).

Belongs to the UbiA prenyltransferase family. Protoheme IX farnesyltransferase subfamily.

The protein localises to the cell inner membrane. The enzyme catalyses heme b + (2E,6E)-farnesyl diphosphate + H2O = Fe(II)-heme o + diphosphate. The protein operates within porphyrin-containing compound metabolism; heme O biosynthesis; heme O from protoheme: step 1/1. In terms of biological role, converts heme B (protoheme IX) to heme O by substitution of the vinyl group on carbon 2 of heme B porphyrin ring with a hydroxyethyl farnesyl side group. This is Protoheme IX farnesyltransferase from Novosphingobium aromaticivorans (strain ATCC 700278 / DSM 12444 / CCUG 56034 / CIP 105152 / NBRC 16084 / F199).